Consider the following 60-residue polypeptide: Putative insect toxin Acra6 (60 aa).

Residues 2–60 enclose the LCN-type CS-alpha/beta domain; it reads RDGYIRRKDEFKFKCYVDGKDCDDVCKSEGGSAGYCTALGFLCYCAGLPDDKAWKPTSS. Cystine bridges form between C16–C37, C23–C44, and C27–C46.

Belongs to the long (4 C-C) scorpion toxin superfamily. Sodium channel inhibitor family. Beta subfamily. In terms of tissue distribution, expressed by the venom gland.

Its subcellular location is the secreted. In terms of biological role, depressant insect toxins cause a transient contraction paralysis followed by a slow flaccid paralysis. They bind voltage-independently to sodium channels (Nav) and block action potentials, primarily by depolarizing the axonal membrane and suppressing the sodium current. In Androctonus crassicauda (Arabian fat-tailed scorpion), this protein is Putative insect toxin Acra6.